Reading from the N-terminus, the 977-residue chain is Dynamin-like GTPase OPA1, mitochondrial (977 aa).

A mitochondrion-targeting transit peptide spans 1–86 (MWRTKAAAAC…VKYGYQSYRN (86 aa)). Over 87-95 (FWLARLASR) the chain is Mitochondrial matrix. Residues 96-112 (LLKIRYLILGSAVGGGY) form a helical membrane-spanning segment. Residues 113–787 (TAKKTYDQWE…SVIEDMVGPD (675 aa)) lie on the Mitochondrial intermembrane side of the membrane. Residues 224-271 (KKVSDKEKIDQLQEELLRTQLKYQRMLERLEKENKELRKLVLQRDDKG) are a coiled coil. The 277-residue stretch at 302–578 (QDHLPRVVVV…FWKMVRESVE (277 aa)) folds into the Dynamin-type G domain. Positions 312 to 319 (GDQSAGKT) are G1 motif. GTP is bound by residues S315, G317, K318, T319, S320, and G334. A Mg(2+)-binding site is contributed by T319. A G2 motif region spans residues 338-341 (MMTR). Mg(2+) is bound by residues T340 and D415. The interval 415–418 (DLPG) is G3 motif. The interval 484–487 (TKVD) is G4 motif. GTP is bound by residues K485, D487, and T520. Positions 518–521 (VVTG) are G5 motif. Stalk region regions lie at residues 606–853 (DRNE…IKDT) and 891–945 (CNDI…VKLL). The segment at 753–873 (SDKQQWDAAI…KTALNHCNLC (121 aa)) is paddle region. An intramembrane segment occupies 788 to 798 (WKKRWLYWISR). Residues 799–977 (TKEQNIRNET…AFIEALHQEK (179 aa)) are Mitochondrial intermembrane-facing. C873 and C891 are joined by a disulfide. A coiled-coil region spans residues 911 to 977 (LRQQLTNTEV…AFIEALHQEK (67 aa)).

This sequence belongs to the TRAFAC class dynamin-like GTPase superfamily. Dynamin/Fzo/YdjA family. As to quaternary structure, oligomeric complex consisting of membrane-bound and soluble forms of OPA1. In terms of processing, cleaved by OMA1 or YME1L downstream of the transmembrane region in response to different signals to generate soluble forms. Cleaved by OMA1 at position S1 following stress conditions, generating the short soluble form (Dynamin-like GTPase OPA1, short form; S-OPA1).

The protein resides in the mitochondrion inner membrane. It localises to the mitochondrion intermembrane space. It catalyses the reaction GTP + H2O = GDP + phosphate + H(+). In terms of biological role, dynamin-related GTPase that is essential for normal mitochondrial morphology by mediating fusion of the mitochondrial inner membranes, regulating cristae morphology and maintaining respiratory chain function. Exists in two forms: the transmembrane, long form (Dynamin-like GTPase OPA1, long form; L-OPA1), which is tethered to the inner mitochondrial membrane, and the short soluble form (Dynamin-like GTPase OPA1, short form; S-OPA1), which results from proteolytic cleavage and localizes in the intermembrane space. Both forms (L-OPA1 and S-OPA1) cooperate to catalyze the fusion of the mitochondrial inner membrane. The equilibrium between L-OPA1 and S-OPA1 is essential: excess levels of S-OPA1, produced by cleavage by OMA1 following loss of mitochondrial membrane potential, lead to an impaired equilibrium between L-OPA1 and S-OPA1, inhibiting mitochondrial fusion. The balance between L-OPA1 and S-OPA1 also influences cristae shape and morphology. Its role in mitochondrial morphology is required for mitochondrial genome maintenance. Functionally, constitutes the transmembrane long form (L-OPA1) that plays a central role in mitochondrial inner membrane fusion and cristae morphology. L-OPA1 and the soluble short form (S-OPA1) form higher-order helical assemblies that coordinate the fusion of mitochondrial inner membranes. Inner membrane-anchored L-OPA1 molecules initiate membrane remodeling by recruiting soluble S-OPA1 to rapidly polymerize into a flexible cylindrical scaffold encaging the mitochondrial inner membrane. Once at the membrane surface, the formation of S-OPA1 helices induce bilayer curvature. OPA1 dimerization through the paddle region, which inserts into cardiolipin-containing membrane, promotes GTP hydrolysis and the helical assembly of a flexible OPA1 lattice on the membrane, which drives membrane curvature and mitochondrial fusion. Plays a role in the maintenance and remodeling of mitochondrial cristae, some invaginations of the mitochondrial inner membrane that provide an increase in the surface area. Probably acts by forming helical filaments at the inside of inner membrane tubes with the shape and dimensions of crista junctions. Its function is as follows. Constitutes the soluble short form (S-OPA1) generated by cleavage by OMA1, which plays a central role in mitochondrial inner membrane fusion and cristae morphology. The transmembrane long form (L-OPA1) and the S-OPA1 form higher-order helical assemblies that coordinate the fusion of mitochondrial inner membranes. Inner membrane-anchored L-OPA1 molecules initiate membrane remodeling by recruiting soluble S-OPA1 to rapidly polymerize into a flexible cylindrical scaffold encaging the mitochondrial inner membrane. Once at the membrane surface, the formation of S-OPA1 helices induce bilayer curvature. OPA1 dimerization through the paddle region, which inserts into cardiolipin-containing membrane, promotes GTP hydrolysis and the helical assembly of a flexible OPA1 lattice on the membrane, which drives membrane curvature and mitochondrial fusion. Excess levels of S-OPA1 produced by cleavage by OMA1 following stress conditions that induce loss of mitochondrial membrane potential, lead to an impaired equilibrium between L-OPA1 and S-OPA1, thereby inhibiting mitochondrial fusion. Plays a role in the maintenance and remodeling of mitochondrial cristae, some invaginations of the mitochondrial inner membrane that provide an increase in the surface area. Probably acts by forming helical filaments at the inside of inner membrane tubes with the shape and dimensions of crista junctions. The sequence is that of Dynamin-like GTPase OPA1, mitochondrial from Gallus gallus (Chicken).